Here is a 580-residue protein sequence, read N- to C-terminus: MTAPAGPRGSETERLLTPNPGYGTQAGPSPAPPTPPEEEDLRRRLKYFFMSPCDKFRAKGRKPCKLMLQVVKILVVTVQLILFGLSNQLAVTFREENTIAFRHLFLLGYSDGADDTFAAYTREQLYQAIFHAVDQYLALPDVSLGRYAYVRGGGDPWTNGSGLALCQRYYHRGHVDPANDTFDIDPMVVTDCIQVDPPERPPPPPSDDLTLLESSSSYKNLTLKFHKLVNVTIHFRLKTINLQSLINNEIPDCYTFSVLITFDNKAHSGRIPISLETQAHIQECKHPSVFQHGDNSFRLLFDVVVILTCSLSFLLCARSLLRGFLLQNEFVGFMWRQRGRVISLWERLEFVNGWYILLVTSDVLTISGTIMKIGIEAKNLASYDVCSILLGTSTLLVWVGVIRYLTFFHNYNILIATLRVALPSVMRFCCCVAVIYLGYCFCGWIVLGPYHVKFRSLSMVSECLFSLINGDDMFVTFAAMQAQQGRSSLVWLFSQLYLYSFISLFIYMVLSLFIALITGAYDTIKHPGGAGAEESELQAYIAQCQDSPTSGKFRRGSGSACSLLCCCGRDPSEEHSLLVN.

The segment at 1-38 is disordered; that stretch reads MTAPAGPRGSETERLLTPNPGYGTQAGPSPAPPTPPEE. At 1–65 the chain is on the cytoplasmic side; that stretch reads MTAPAGPRGS…FRAKGRKPCK (65 aa). Serine 10 bears the Phosphoserine mark. Residues 11-16 carry the Dileucine motif; mediates targeting to lysosomes motif; sequence ETERLL. The interval 42–62 is interaction with phosphoinositides; that stretch reads RRRLKYFFMSPCDKFRAKGRK. Residues 66-86 form a helical membrane-spanning segment; sequence LMLQVVKILVVTVQLILFGLS. Topologically, residues 87–298 are extracellular; that stretch reads NQLAVTFREE…VFQHGDNSFR (212 aa). The extracellular/lumenal pore loop stretch occupies residues 107–121; it reads LGYSDGADDTFAAYT. Cysteine 166 and cysteine 192 form a disulfide bridge. N-linked (GlcNAc...) asparagine glycosylation occurs at asparagine 230. Cysteine 253 and cysteine 284 are disulfide-bonded. Residues 299 to 321 traverse the membrane as a helical segment; it reads LLFDVVVILTCSLSFLLCARSLL. At 322–350 the chain is on the cytoplasmic side; sequence RGFLLQNEFVGFMWRQRGRVISLWERLEF. Residues 351 to 371 form a helical membrane-spanning segment; the sequence is VNGWYILLVTSDVLTISGTIM. At 372–382 the chain is on the extracellular side; sequence KIGIEAKNLAS. A helical transmembrane segment spans residues 383-405; that stretch reads YDVCSILLGTSTLLVWVGVIRYL. The Cytoplasmic portion of the chain corresponds to 406 to 427; it reads TFFHNYNILIATLRVALPSVMR. The helical transmembrane segment at 428–448 threads the bilayer; that stretch reads FCCCVAVIYLGYCFCGWIVLG. The Extracellular portion of the chain corresponds to 449-456; sequence PYHVKFRS. An intramembrane region (pore-forming) is located at residues 457-477; it reads LSMVSECLFSLINGDDMFVTF. Residues 469–474 carry the Selectivity filter motif; sequence NGDDMF. The Extracellular segment spans residues 478 to 491; it reads AAMQAQQGRSSLVW. The helical transmembrane segment at 492–513 threads the bilayer; the sequence is LFSQLYLYSFISLFIYMVLSLF. Topologically, residues 514-580 are cytoplasmic; that stretch reads IALITGAYDT…PSEEHSLLVN (67 aa). Phosphoserine; by PAK is present on residues serine 557 and serine 559. Positions 565 to 567 are required for palmitoylation and association with membranes; it reads CCC. Residues 573–578 carry the Dileucine internalization motif; mediates AP2 complex-dependent internalization motif; it reads EEHSLL.

The protein belongs to the transient receptor (TC 1.A.4) family. Polycystin subfamily. MCOLN1 sub-subfamily. Homotetramer. Homooligomer. Can heterooligomerize with MCOLN2 or MCOLN3; heteromeric assemblies have different channel properties as compared to the respective homooligomers and may be tissue-specific. Interacts with PDCD6. Interacts with TMEM163. Interacts with LAPTM4B. In terms of processing, palmitoylated; involved in association with membranes. Post-translationally, phosphorylation by PKA inhibits channel activity. Dephosphorylation increases activity. Proteolytically cleaved probably involving multiple lysosomal proteases including cathepsin B; inhibits lysosomal channel activity. In terms of tissue distribution, widely expressed in adult and fetal tissues.

It localises to the late endosome membrane. The protein localises to the lysosome membrane. The protein resides in the cytoplasmic vesicle membrane. It is found in the cell projection. Its subcellular location is the phagocytic cup. It localises to the cytoplasmic vesicle. The protein localises to the phagosome membrane. The protein resides in the cell membrane. The catalysed reaction is Ca(2+)(in) = Ca(2+)(out). The enzyme catalyses Fe(2+)(in) = Fe(2+)(out). It catalyses the reaction Mg(2+)(in) = Mg(2+)(out). It carries out the reaction K(+)(in) = K(+)(out). The catalysed reaction is Na(+)(in) = Na(+)(out). With respect to regulation, channel activity is controlled by multiple regulatory mechanisms in different subcellular compartments. Channel function is transiently modulated by changes in Ca(2+) in a pH-dependent manner; pH changes modify the aggregation state of unitary channels; a negative cooperativity between extracellular/lumenal Ca(2+) and H(+) is suggested. Regulated by phosphoinositides in a compartment-specific manner: in lysosomes activated by PtdIns(3,5)P2 (Phosphatidylinositol 3,5-bisphosphate) and at the plasma membrane inhibited by PtdIns(4,5)P2 (Phosphatidylinositol 4,5-bisphosphate). In terms of biological role, nonselective cation channel probably playing a role in the regulation of membrane trafficking events and of metal homeostasis. Acts as a Ca(2+)-permeable cation channel with inwardly rectifying activity. Proposed to play a major role in Ca(2+) release from late endosome and lysosome vesicles to the cytoplasm, which is important for many lysosome-dependent cellular events, including the fusion and trafficking of these organelles, exocytosis and autophagy. Required for efficient uptake of large particles in macrophages in which Ca(2+) release from the lysosomes triggers lysosomal exocytosis. May also play a role in phagosome-lysosome fusion. Involved in lactosylceramide trafficking indicative for a role in the regulation of late endocytic membrane fusion/fission events. By mediating lysosomal Ca(2+) release is involved in regulation of mTORC1 signaling and in mTOR/TFEB-dependent lysosomal adaptation to environmental cues such as nutrient levels. Seems to act as lysosomal active oxygen species (ROS) sensor involved in ROS-induced TFEB activation and autophagy. Also functions as a Fe(2+) permeable channel in late endosomes and lysosomes. Also permeable to Mg(2+), Na(+). K(+) and Cs(+). Proposed to play a role in zinc homeostasis probably implicating its association with TMEM163 In adaptive immunity, TRPML2 and TRPML1 may play redundant roles in the function of the specialized lysosomes of B cells. May contribute to cellular lipase activity within the late endosomal pathway or at the cell surface which may be involved in processes of membrane reshaping and vesiculation, especially the growth of tubular structures. However, it is not known, whether it conveys the enzymatic activity directly, or merely facilitates the activity of an associated phospholipase. The sequence is that of Mucolipin-1 from Homo sapiens (Human).